A 1218-amino-acid polypeptide reads, in one-letter code: Thrombospondin type 1 domain-containing protein (1218 aa).

Disordered stretches follow at residues 82 to 101 (SAGF…PCSS), 189 to 240 (SLEE…SRTR), 298 to 383 (HTAN…VNGL), and 445 to 471 (GGKS…SHRG). Residues 201–210 (GYEEERERRS) are compositionally biased toward basic and acidic residues. Residues 315 to 375 (SSRFTSKASS…SSPLSSSPDS (61 aa)) show a composition bias toward low complexity. In terms of domain architecture, TSP type-1 spans 638-704 (SCITGPWSEW…RRKCNLGACP (67 aa)). A helical transmembrane segment spans residues 886-906 (GVSHLWISLCAGAVAAVVFLV). The interval 1129–1153 (RRRARRGRREGDSGEGGDCGEARKA) is disordered.

In terms of assembly, component of a complex, at least composed of cysteine repeat modular protein A (CRMPa), cysteine repeat modular protein B (CRMPb), micronemal protein 15 (MIC15) and thrombospondin type 1 domain-containing protein (TSP1).

The protein localises to the membrane. Its function is as follows. Required for rhoptry secretion. Plays a role in host cell invasion. This Toxoplasma gondii protein is Thrombospondin type 1 domain-containing protein.